The primary structure comprises 228 residues: Archaeal flagellar ATP-binding protein FlaH (228 aa).

Residues Gly30, Thr31, Lys33, Ser34, Val35, Glu57, and Lys191 each contribute to the ATP site. A Mg(2+)-binding site is contributed by Ser34. Residue Glu57 participates in Mg(2+) binding.

Belongs to the FlaH family. As to quaternary structure, the S.acidocaldarius archaellum assembly machinery and its filament consist of seven proteins (FlaB, FlaF, FlaG, FlaH, FlaI, FlaJ and FlaX). Interacts directly with the FlaX ring and the motor ATPase FlaI. Monomers, which can probably form homohexamers upon binding to ATP. In vitro, FlaH assembles as a second ring inside the FlaX ring.

Its subcellular location is the archaeal flagellum. The protein resides in the cytoplasm. Functionally, component of the archaellum. FlaX, FlaH and FlaI form the core cytoplasmic motor complex of the crenarchaeal archaellum. FlaH binds ATP with high affinity but lacks detectable in vitro ATPase activity. ATP binding is essential for interaction with FlaI and for archaellum assembly. The sequence is that of Archaeal flagellar ATP-binding protein FlaH from Sulfolobus acidocaldarius (strain ATCC 33909 / DSM 639 / JCM 8929 / NBRC 15157 / NCIMB 11770).